Reading from the N-terminus, the 727-residue chain is Prolyl endopeptidase-like (727 aa).

Catalysis depends on charge relay system residues serine 559, aspartate 645, and histidine 690.

This sequence belongs to the peptidase S9A family. Homodimer. Interacts with the AP-1 complex.

It localises to the cytoplasm. It is found in the cytosol. The protein localises to the golgi apparatus. Its subcellular location is the trans-Golgi network. The protein resides in the cytoskeleton. It localises to the nucleus. In terms of biological role, serine peptidase whose precise substrate specificity remains unclear. Does not cleave peptides after a arginine or lysine residue. Regulates trans-Golgi network morphology and sorting by regulating the membrane binding of the AP-1 complex. May play a role in the regulation of synaptic vesicle exocytosis. The sequence is that of Prolyl endopeptidase-like (PREPL) from Pongo abelii (Sumatran orangutan).